The primary structure comprises 293 residues: Protease HtpX homolog (293 aa).

A run of 2 helical transmembrane segments spans residues 4–24 (IFLF…TMRI) and 38–58 (LTGL…ISLL). Histidine 146 is a Zn(2+) binding site. Glutamate 147 is an active-site residue. Histidine 150 lines the Zn(2+) pocket. The next 2 membrane-spanning stretches (helical) occupy residues 161–181 (LIQG…GYFV) and 198–218 (ATVI…VAWF). Position 223 (glutamate 223) interacts with Zn(2+).

Belongs to the peptidase M48B family. Zn(2+) is required as a cofactor.

It localises to the cell inner membrane. The protein is Protease HtpX homolog of Bordetella parapertussis (strain 12822 / ATCC BAA-587 / NCTC 13253).